Consider the following 358-residue polypeptide: Alanine racemase (358 aa).

Lysine 35 functions as the Proton acceptor; specific for D-alanine in the catalytic mechanism. An N6-(pyridoxal phosphate)lysine modification is found at lysine 35. A substrate-binding site is contributed by arginine 130. Tyrosine 255 (proton acceptor; specific for L-alanine) is an active-site residue. Position 303 (methionine 303) interacts with substrate.

It belongs to the alanine racemase family. Pyridoxal 5'-phosphate is required as a cofactor.

It catalyses the reaction L-alanine = D-alanine. The protein operates within amino-acid biosynthesis; D-alanine biosynthesis; D-alanine from L-alanine: step 1/1. Catalyzes the interconversion of L-alanine and D-alanine. May also act on other amino acids. The polypeptide is Alanine racemase (alr) (Shewanella sp. (strain MR-4)).